The primary structure comprises 342 residues: Oxygen-dependent coproporphyrinogen-III oxidase (342 aa).

Substrate is bound at residue S98. 2 residues coordinate a divalent metal cation: H102 and H112. H112 acts as the Proton donor in catalysis. 114 to 116 (NYR) lines the substrate pocket. A divalent metal cation-binding residues include H146 and H176. The interval 266–301 (YVEFNLVWDRGTIFGLQTNGRTESILMSLPPLARWE) is important for dimerization.

The protein belongs to the aerobic coproporphyrinogen-III oxidase family. As to quaternary structure, homodimer. Requires a divalent metal cation as cofactor.

It is found in the cytoplasm. The catalysed reaction is coproporphyrinogen III + O2 + 2 H(+) = protoporphyrinogen IX + 2 CO2 + 2 H2O. Its pathway is porphyrin-containing compound metabolism; protoporphyrin-IX biosynthesis; protoporphyrinogen-IX from coproporphyrinogen-III (O2 route): step 1/1. Functionally, involved in the heme and chlorophyll biosynthesis. Catalyzes the aerobic oxidative decarboxylation of propionate groups of rings A and B of coproporphyrinogen-III to yield the vinyl groups in protoporphyrinogen-IX. This is Oxygen-dependent coproporphyrinogen-III oxidase from Prochlorococcus marinus subsp. pastoris (strain CCMP1986 / NIES-2087 / MED4).